A 205-amino-acid polypeptide reads, in one-letter code: Probable ADP-ribosylation factor At2g15310 (205 aa).

Gly2 carries the N-myristoyl glycine lipid modification. GTP is bound by residues 24–31 (GLDGSGKT), 67–71 (DIGGQ), and 126–129 (NKQD).

Belongs to the small GTPase superfamily. Arf family.

It is found in the golgi apparatus. Its function is as follows. GTP-binding protein involved in protein trafficking; may modulate vesicle budding and uncoating within the Golgi apparatus. This chain is Probable ADP-ribosylation factor At2g15310, found in Arabidopsis thaliana (Mouse-ear cress).